A 94-amino-acid polypeptide reads, in one-letter code: MEVVLIFVYSLLVPVVLASAAKEKEIDPFHYNYQTLRIGGLVFDVVLFLVPSCHLLSHRCKCSFNQKPQDPGDKEAQVENFITANAKEPQKAKN.

The first 18 residues, 1–18, serve as a signal peptide directing secretion; that stretch reads MEVVLIFVYSLLVPVVLA. At 19 to 34 the chain is on the extracellular side; that stretch reads SAAKEKEIDPFHYNYQ. Residues 35-58 form a helical membrane-spanning segment; it reads TLRIGGLVFDVVLFLVPSCHLLSH. The Cytoplasmic portion of the chain corresponds to 59–94; sequence RCKCSFNQKPQDPGDKEAQVENFITANAKEPQKAKN. A disordered region spans residues 66 to 94; that stretch reads QKPQDPGDKEAQVENFITANAKEPQKAKN.

Belongs to the FXYD family.

It localises to the membrane. This chain is Putative FXYD domain-containing ion transport regulator 8 (FXYD6P3), found in Homo sapiens (Human).